Reading from the N-terminus, the 308-residue chain is Lipoyl synthase (308 aa).

[4Fe-4S] cluster is bound by residues Cys-51, Cys-56, Cys-62, Cys-77, Cys-81, Cys-84, and Ser-290. The Radical SAM core domain maps to 63–279 (WSKRHATFMI…ETIAKSKGFL (217 aa)).

The protein belongs to the radical SAM superfamily. Lipoyl synthase family. It depends on [4Fe-4S] cluster as a cofactor.

It localises to the cytoplasm. It carries out the reaction [[Fe-S] cluster scaffold protein carrying a second [4Fe-4S](2+) cluster] + N(6)-octanoyl-L-lysyl-[protein] + 2 oxidized [2Fe-2S]-[ferredoxin] + 2 S-adenosyl-L-methionine + 4 H(+) = [[Fe-S] cluster scaffold protein] + N(6)-[(R)-dihydrolipoyl]-L-lysyl-[protein] + 4 Fe(3+) + 2 hydrogen sulfide + 2 5'-deoxyadenosine + 2 L-methionine + 2 reduced [2Fe-2S]-[ferredoxin]. It participates in protein modification; protein lipoylation via endogenous pathway; protein N(6)-(lipoyl)lysine from octanoyl-[acyl-carrier-protein]: step 2/2. Functionally, catalyzes the radical-mediated insertion of two sulfur atoms into the C-6 and C-8 positions of the octanoyl moiety bound to the lipoyl domains of lipoate-dependent enzymes, thereby converting the octanoylated domains into lipoylated derivatives. This chain is Lipoyl synthase, found in Pelagibacter ubique (strain HTCC1062).